We begin with the raw amino-acid sequence, 634 residues long: DNA-directed RNA polymerase subunit gamma (634 aa).

Positions 74, 76, 89, and 92 each coordinate Zn(2+). Residues Asp-471, Asp-473, and Asp-475 each coordinate Mg(2+).

Belongs to the RNA polymerase beta' chain family. RpoC1 subfamily. As to quaternary structure, in cyanobacteria the RNAP catalytic core is composed of 2 alpha, 1 beta, 1 beta', 1 gamma and 1 omega subunit. When a sigma factor is associated with the core the holoenzyme is formed, which can initiate transcription. Requires Mg(2+) as cofactor. Zn(2+) serves as cofactor.

It catalyses the reaction RNA(n) + a ribonucleoside 5'-triphosphate = RNA(n+1) + diphosphate. Its function is as follows. DNA-dependent RNA polymerase catalyzes the transcription of DNA into RNA using the four ribonucleoside triphosphates as substrates. The sequence is that of DNA-directed RNA polymerase subunit gamma from Prochlorococcus marinus (strain MIT 9312).